The primary structure comprises 331 residues: Cytochrome bo(3) ubiquinol oxidase subunit 2 (331 aa).

The N-terminal stretch at 1 to 23 is a signal peptide; sequence MTKANPFAALKWLSLAPALLLGG. Cysteine 24 is lipidated: N-palmitoyl cysteine. The S-diacylglycerol cysteine moiety is linked to residue cysteine 24. The Periplasmic segment spans residues 24 to 41; the sequence is CDMTLFNPKGQVGMDERT. The helical transmembrane segment at 42 to 62 threads the bilayer; sequence LIITATLLMLIVVIPVIVMTL. Over 63 to 86 the chain is Cytoplasmic; it reads AFAWKYRASNTQAEYKPDWHHSNR. A helical membrane pass occupies residues 87–107; the sequence is IEAVVWLVPCVIIAILGWITW. Over 108–331 the chain is Periplasmic; it reads ESTHKLDPYR…DMHMQPSTQE (224 aa).

It belongs to the cytochrome c oxidase subunit 2 family. As to quaternary structure, heterooctamer of two A chains, two B chains, two C chains and two D chains.

It is found in the cell inner membrane. Functionally, cytochrome bo(3) ubiquinol terminal oxidase is the component of the aerobic respiratory chain of E.coli that predominates when cells are grown at high aeration. Has proton pump activity across the membrane in addition to electron transfer, pumping 2 protons/electron. This is Cytochrome bo(3) ubiquinol oxidase subunit 2 (cyoA) from Pseudomonas aeruginosa (strain ATCC 15692 / DSM 22644 / CIP 104116 / JCM 14847 / LMG 12228 / 1C / PRS 101 / PAO1).